A 516-amino-acid chain; its full sequence is D-alanine--D-alanyl carrier protein ligase (516 aa).

156–157 is an ATP binding site; the sequence is TS. Residue aspartate 203 coordinates D-alanine. Residue 298-303 participates in ATP binding; sequence NAYGPT. Residue valine 307 participates in D-alanine binding. ATP is bound by residues aspartate 389, 401–404, and lysine 503; that span reads YGGR. Residue lysine 503 participates in D-alanine binding.

The protein belongs to the ATP-dependent AMP-binding enzyme family. DltA subfamily.

It is found in the cytoplasm. The enzyme catalyses holo-[D-alanyl-carrier protein] + D-alanine + ATP = D-alanyl-[D-alanyl-carrier protein] + AMP + diphosphate. It participates in cell wall biogenesis; lipoteichoic acid biosynthesis. Catalyzes the first step in the D-alanylation of lipoteichoic acid (LTA), the activation of D-alanine and its transfer onto the D-alanyl carrier protein (Dcp) DltC. In an ATP-dependent two-step reaction, forms a high energy D-alanyl-AMP intermediate, followed by transfer of the D-alanyl residue as a thiol ester to the phosphopantheinyl prosthetic group of the Dcp. D-alanylation of LTA plays an important role in modulating the properties of the cell wall in Gram-positive bacteria, influencing the net charge of the cell wall. The chain is D-alanine--D-alanyl carrier protein ligase from Streptococcus pneumoniae serotype 4 (strain ATCC BAA-334 / TIGR4).